Consider the following 305-residue polypeptide: Probable L-ribulose-5-phosphate 3-epimerase UlaE (305 aa).

This sequence belongs to the L-ribulose-5-phosphate 3-epimerase family.

It carries out the reaction L-ribulose 5-phosphate = L-xylulose 5-phosphate. The protein operates within cofactor degradation; L-ascorbate degradation; D-xylulose 5-phosphate from L-ascorbate: step 3/4. Functionally, catalyzes the isomerization of L-xylulose-5-phosphate to L-ribulose-5-phosphate. Is involved in the anaerobic L-ascorbate utilization. This Mycoplasma pneumoniae (strain ATCC 29342 / M129 / Subtype 1) (Mycoplasmoides pneumoniae) protein is Probable L-ribulose-5-phosphate 3-epimerase UlaE (ulaE).